The chain runs to 354 residues: Glycerol-3-phosphate dehydrogenase [NAD(+)], glycosomal (354 aa).

NAD(+) is bound by residues 15 to 20, Phe90, Lys118, and Ala150; that span reads GSGAFG. Lys118 contacts substrate. The active-site Proton acceptor is the Lys203. Residues Arg267 and Glu293 each contribute to the NAD(+) site. 267–268 serves as a coordination point for substrate; sequence RN. Residues 352 to 354 carry the Microbody targeting signal motif; the sequence is SKM.

It belongs to the NAD-dependent glycerol-3-phosphate dehydrogenase family.

It is found in the glycosome. It catalyses the reaction sn-glycerol 3-phosphate + NAD(+) = dihydroxyacetone phosphate + NADH + H(+). This Trypanosoma brucei brucei protein is Glycerol-3-phosphate dehydrogenase [NAD(+)], glycosomal (GPD).